A 643-amino-acid polypeptide reads, in one-letter code: Asparagine synthetase domain-containing protein 1 (643 aa).

Residue C2 is the For GATase activity of the active site. In terms of domain architecture, Glutamine amidotransferase type-2 spans 2–184 (CGICCSVNFS…ASGLFRIDLK (183 aa)). The region spanning 285-601 (QFIDVLSVAV…GLTASALLPK (317 aa)) is the Asparagine synthetase domain.

This is Asparagine synthetase domain-containing protein 1 (ASNSD1) from Homo sapiens (Human).